A 349-amino-acid chain; its full sequence is 2-oxoglutarate-Fe(II) type oxidoreductase ppzD (349 aa).

In terms of domain architecture, Fe2OG dioxygenase spans 200–311 (NTSELRLNHY…RYSVAYFGKP (112 aa)). The Fe cation site is built by histidine 227, aspartate 229, and histidine 287. 2-oxoglutarate is bound at residue arginine 302.

It belongs to the iron/ascorbate-dependent oxidoreductase family. Fe(2+) serves as cofactor.

It catalyses the reaction L-proline + 2-oxoglutarate + O2 = trans-4-hydroxy-L-proline + succinate + CO2. It carries out the reaction L-proline + 2-oxoglutarate + O2 = trans-3-hydroxy-L-proline + succinate + CO2. The enzyme catalyses D-proline + 2-oxoglutarate + O2 = cis-4-hydroxy-D-proline + succinate + CO2. The protein operates within secondary metabolite biosynthesis. Functionally, 2-oxoglutarate-Fe(II) type oxidoreductase; part of the gene cluster that mediates the biosynthesis of pyrrolopyrazines, secondary metabolites showing insecticidal activity. Within the pathway, ppzD converts L-proline into trans-4-hydroxy-L-proline as a major product, yielding a key precursor for peramine biosynthesis. PpzD is also able to convert L-proline into trans-3-hydroxy-L-proline. The single multifunctional NRPS ppzA is sufficient to produce peramine via condensation of 1-pyrroline-5-carboxylate and arginine, N-methylation of the alpha-amino group of arginine and reduction of the thioester and the cyclization to form an iminium ion resulting in release from the peptide synthetase. Deprotonation of this intermediate and oxidation of the pyrroline ring would give rise to peramine. In Epichloe species that produce only peramine, the peramine synthetase gene is not localized in a gene cluster, in contrast to Metarhizium species that contain additional pyrrolopyrazine biosynthesis genes. The 2-oxoglutarate-Fe(II) type oxidoreductase ppzC hydroxylates peramine to yield the newly identified compound 8-hydroxyperamine whereas ppzD converts L-proline into trans-4-hydroxy-L-proline, a precursor of peramine biosynthesis. The chain is 2-oxoglutarate-Fe(II) type oxidoreductase ppzD (ppzD) from Metarhizium majus (strain ARSEF 297).